The sequence spans 370 residues: Small ribosomal subunit biogenesis GTPase RsgA 1 (370 aa).

A CP-type G domain is found at 97–255 (QTQLDRPPIA…LADTPGFNQP (159 aa)). GTP contacts are provided by residues 146-149 (NKSD) and 197-205 (GPSGVGKSS). Residues C280, C285, H287, and C293 each contribute to the Zn(2+) site. The segment at 325-370 (PESTLKLKTKGKGQSQYEPKLESKKYRRTSRRTQVQGLQDLYQEEE) is disordered.

Belongs to the TRAFAC class YlqF/YawG GTPase family. RsgA subfamily. As to quaternary structure, monomer. Associates with 30S ribosomal subunit, binds 16S rRNA. Requires Zn(2+) as cofactor.

Its subcellular location is the cytoplasm. Its function is as follows. One of several proteins that assist in the late maturation steps of the functional core of the 30S ribosomal subunit. Helps release RbfA from mature subunits. May play a role in the assembly of ribosomal proteins into the subunit. Circularly permuted GTPase that catalyzes slow GTP hydrolysis, GTPase activity is stimulated by the 30S ribosomal subunit. The polypeptide is Small ribosomal subunit biogenesis GTPase RsgA 1 (Nostoc sp. (strain PCC 7120 / SAG 25.82 / UTEX 2576)).